Consider the following 103-residue polypeptide: Small ribosomal subunit protein uS10 (103 aa).

Belongs to the universal ribosomal protein uS10 family. As to quaternary structure, part of the 30S ribosomal subunit.

Functionally, involved in the binding of tRNA to the ribosomes. This chain is Small ribosomal subunit protein uS10, found in Buchnera aphidicola subsp. Acyrthosiphon pisum (strain 5A).